A 324-amino-acid chain; its full sequence is Ribosomal RNA small subunit methyltransferase H (324 aa).

Residues 40–42 (AGH), D60, L94, D108, and H115 contribute to the S-adenosyl-L-methionine site. The segment at 301-324 (EEMKVNTRSRSAKLRVAERTGEDG) is disordered. Residues 315–324 (RVAERTGEDG) show a composition bias toward basic and acidic residues.

Belongs to the methyltransferase superfamily. RsmH family.

Its subcellular location is the cytoplasm. The enzyme catalyses cytidine(1402) in 16S rRNA + S-adenosyl-L-methionine = N(4)-methylcytidine(1402) in 16S rRNA + S-adenosyl-L-homocysteine + H(+). Specifically methylates the N4 position of cytidine in position 1402 (C1402) of 16S rRNA. This chain is Ribosomal RNA small subunit methyltransferase H, found in Maridesulfovibrio salexigens (strain ATCC 14822 / DSM 2638 / NCIMB 8403 / VKM B-1763) (Desulfovibrio salexigens).